The primary structure comprises 426 residues: 3-isopropylmalate dehydratase large subunit (426 aa).

3 residues coordinate [4Fe-4S] cluster: cysteine 307, cysteine 367, and cysteine 370.

It belongs to the aconitase/IPM isomerase family. LeuC type 2 subfamily. In terms of assembly, heterodimer of LeuC and LeuD. [4Fe-4S] cluster is required as a cofactor.

The enzyme catalyses (2R,3S)-3-isopropylmalate = (2S)-2-isopropylmalate. It functions in the pathway amino-acid biosynthesis; L-leucine biosynthesis; L-leucine from 3-methyl-2-oxobutanoate: step 2/4. Functionally, catalyzes the isomerization between 2-isopropylmalate and 3-isopropylmalate, via the formation of 2-isopropylmaleate. In Aliarcobacter butzleri (strain RM4018) (Arcobacter butzleri), this protein is 3-isopropylmalate dehydratase large subunit.